The following is a 467-amino-acid chain: tRNA modification GTPase MnmE (467 aa).

R27, E89, and R128 together coordinate (6S)-5-formyl-5,6,7,8-tetrahydrofolate. A TrmE-type G domain is found at 225–387 (GISMVIAGRP…LKQAIFTVVT (163 aa)). Position 235 (N235) interacts with K(+). GTP-binding positions include 235 to 240 (NVGKSS), 254 to 260 (TSIAGTT), 279 to 282 (DTAG), and 368 to 370 (SAR). A Mg(2+)-binding site is contributed by S239. Positions 254, 256, and 259 each coordinate K(+). T260 contacts Mg(2+). K467 provides a ligand contact to (6S)-5-formyl-5,6,7,8-tetrahydrofolate.

The protein belongs to the TRAFAC class TrmE-Era-EngA-EngB-Septin-like GTPase superfamily. TrmE GTPase family. Homodimer. Heterotetramer of two MnmE and two MnmG subunits. It depends on K(+) as a cofactor.

Its subcellular location is the cytoplasm. Functionally, exhibits a very high intrinsic GTPase hydrolysis rate. Involved in the addition of a carboxymethylaminomethyl (cmnm) group at the wobble position (U34) of certain tRNAs, forming tRNA-cmnm(5)s(2)U34. The protein is tRNA modification GTPase MnmE of Desulfotalea psychrophila (strain LSv54 / DSM 12343).